Consider the following 160-residue polypeptide: Cytochrome c-type biogenesis protein CcmE (160 aa).

Topologically, residues 1-9 are cytoplasmic; sequence MRGLKKKRR. A helical; Signal-anchor for type II membrane protein membrane pass occupies residues 10-30; it reads IQIIAIAAVALTIATIMIGTA. Over 31-160 the chain is Periplasmic; the sequence is MRDGINFFRS…DGGYGGASGS (130 aa). Positions 123 and 127 each coordinate heme. A disordered region spans residues 141-160; sequence VYKDPNATDADGGYGGASGS.

This sequence belongs to the CcmE/CycJ family.

It is found in the cell inner membrane. Its function is as follows. Heme chaperone required for the biogenesis of c-type cytochromes. Transiently binds heme delivered by CcmC and transfers the heme to apo-cytochromes in a process facilitated by CcmF and CcmH. The sequence is that of Cytochrome c-type biogenesis protein CcmE from Dinoroseobacter shibae (strain DSM 16493 / NCIMB 14021 / DFL 12).